Reading from the N-terminus, the 943-residue chain is Leucine--tRNA ligase (943 aa).

The 'HIGH' region signature appears at 40–51; that stretch reads PYPSGAGLHVGH. The 'KMSKS' region signature appears at 717–721; sequence KMSKS. Lys-720 provides a ligand contact to ATP.

This sequence belongs to the class-I aminoacyl-tRNA synthetase family.

It is found in the cytoplasm. The catalysed reaction is tRNA(Leu) + L-leucine + ATP = L-leucyl-tRNA(Leu) + AMP + diphosphate. The chain is Leucine--tRNA ligase from Bacteroides fragilis (strain ATCC 25285 / DSM 2151 / CCUG 4856 / JCM 11019 / LMG 10263 / NCTC 9343 / Onslow / VPI 2553 / EN-2).